The following is a 144-amino-acid chain: Large ribosomal subunit protein uL15 (144 aa).

The segment at 1-57 (MKLNDLSPAPGSRREKHRPGRGIGSGLGKTGGRGHKGQTSRSGGSIAPGFEGGQQPL) is disordered. Positions 21–31 (RGIGSGLGKTG) are enriched in gly residues.

This sequence belongs to the universal ribosomal protein uL15 family. Part of the 50S ribosomal subunit.

Its function is as follows. Binds to the 23S rRNA. This Pseudomonas putida (strain ATCC 700007 / DSM 6899 / JCM 31910 / BCRC 17059 / LMG 24140 / F1) protein is Large ribosomal subunit protein uL15.